Consider the following 175-residue polypeptide: Protein GrpE (175 aa).

This sequence belongs to the GrpE family. Homodimer.

It localises to the cytoplasm. Participates actively in the response to hyperosmotic and heat shock by preventing the aggregation of stress-denatured proteins, in association with DnaK and GrpE. It is the nucleotide exchange factor for DnaK and may function as a thermosensor. Unfolded proteins bind initially to DnaJ; upon interaction with the DnaJ-bound protein, DnaK hydrolyzes its bound ATP, resulting in the formation of a stable complex. GrpE releases ADP from DnaK; ATP binding to DnaK triggers the release of the substrate protein, thus completing the reaction cycle. Several rounds of ATP-dependent interactions between DnaJ, DnaK and GrpE are required for fully efficient folding. The chain is Protein GrpE from Thermoplasma acidophilum (strain ATCC 25905 / DSM 1728 / JCM 9062 / NBRC 15155 / AMRC-C165).